We begin with the raw amino-acid sequence, 162 residues long: Early E1A 18 kDa protein (162 aa).

Positions 134–162 (EEPTEGVAENSLKRQADSSLCSSSPKRFC) are disordered. Polar residues predominate over residues 150-162 (DSSLCSSSPKRFC).

The protein is Early E1A 18 kDa protein of Tree shrew adenovirus serotype 1 (TSAdV-1).